The primary structure comprises 356 residues: Protein RecA (356 aa).

Residue 68–75 (GPESSGKT) participates in ATP binding.

This sequence belongs to the RecA family.

It localises to the cytoplasm. Functionally, can catalyze the hydrolysis of ATP in the presence of single-stranded DNA, the ATP-dependent uptake of single-stranded DNA by duplex DNA, and the ATP-dependent hybridization of homologous single-stranded DNAs. It interacts with LexA causing its activation and leading to its autocatalytic cleavage. This Clostridium botulinum (strain Eklund 17B / Type B) protein is Protein RecA.